The following is a 710-amino-acid chain: Adenylosuccinate synthetase (710 aa).

2 disordered regions span residues M1–Q51 and D84–K111. 2 stretches are compositionally biased toward polar residues: residues Y10–A27 and A101–K111. Residues G180–K186 and G210–T212 contribute to the GTP site. D181 functions as the Proton acceptor in the catalytic mechanism. Mg(2+) contacts are provided by D181 and G210. IMP is bound by residues D181–K184, N208–H211, T295, K309, Q421, T437, and K567. Catalysis depends on H211, which acts as the Proton donor. A563–R569 serves as a coordination point for substrate. GTP contacts are provided by residues R569 and G697 to G699.

Belongs to the adenylosuccinate synthetase family. In terms of assembly, homodimer. The cofactor is Mg(2+).

Its subcellular location is the cytoplasm. The enzyme catalyses IMP + L-aspartate + GTP = N(6)-(1,2-dicarboxyethyl)-AMP + GDP + phosphate + 2 H(+). It functions in the pathway purine metabolism; AMP biosynthesis via de novo pathway; AMP from IMP: step 1/2. Functionally, plays an important role in the salvage pathway for purine nucleotide biosynthesis. Catalyzes the first committed step in the biosynthesis of AMP from IMP. This is Adenylosuccinate synthetase from Leishmania infantum.